Consider the following 457-residue polypeptide: Argininosuccinate lyase (457 aa).

The protein belongs to the lyase 1 family. Argininosuccinate lyase subfamily.

It is found in the cytoplasm. The enzyme catalyses 2-(N(omega)-L-arginino)succinate = fumarate + L-arginine. It participates in amino-acid biosynthesis; L-arginine biosynthesis; L-arginine from L-ornithine and carbamoyl phosphate: step 3/3. In Shigella flexneri serotype 5b (strain 8401), this protein is Argininosuccinate lyase.